The chain runs to 616 residues: Dihydroxy-acid dehydratase (616 aa).

Residue D81 participates in Mg(2+) binding. C122 lines the [2Fe-2S] cluster pocket. Mg(2+) is bound by residues D123 and K124. K124 carries the N6-carboxylysine modification. C195 is a binding site for [2Fe-2S] cluster. Residue E491 coordinates Mg(2+). The active-site Proton acceptor is the S517.

Belongs to the IlvD/Edd family. Homodimer. [2Fe-2S] cluster serves as cofactor. Mg(2+) is required as a cofactor.

The catalysed reaction is (2R)-2,3-dihydroxy-3-methylbutanoate = 3-methyl-2-oxobutanoate + H2O. The enzyme catalyses (2R,3R)-2,3-dihydroxy-3-methylpentanoate = (S)-3-methyl-2-oxopentanoate + H2O. The protein operates within amino-acid biosynthesis; L-isoleucine biosynthesis; L-isoleucine from 2-oxobutanoate: step 3/4. Its pathway is amino-acid biosynthesis; L-valine biosynthesis; L-valine from pyruvate: step 3/4. In terms of biological role, functions in the biosynthesis of branched-chain amino acids. Catalyzes the dehydration of (2R,3R)-2,3-dihydroxy-3-methylpentanoate (2,3-dihydroxy-3-methylvalerate) into 2-oxo-3-methylpentanoate (2-oxo-3-methylvalerate) and of (2R)-2,3-dihydroxy-3-methylbutanoate (2,3-dihydroxyisovalerate) into 2-oxo-3-methylbutanoate (2-oxoisovalerate), the penultimate precursor to L-isoleucine and L-valine, respectively. The chain is Dihydroxy-acid dehydratase from Escherichia coli (strain K12 / MC4100 / BW2952).